Here is a 1072-residue protein sequence, read N- to C-terminus: Carbamoyl phosphate synthase large chain (1072 aa).

The tract at residues 1-401 (MPKRLDINTI…SLLKAVRSLE (401 aa)) is carboxyphosphate synthetic domain. Positions 129, 169, 175, 176, 208, 210, 215, 241, 242, 243, 284, and 298 each coordinate ATP. Residues 133–327 (RTLMQELNEP…IAKLAAKIAV (195 aa)) enclose the ATP-grasp 1 domain. Residues Gln284, Glu298, and Asn300 each coordinate Mg(2+). Mn(2+) is bound by residues Gln284, Glu298, and Asn300. An oligomerization domain region spans residues 402 to 546 (LGIYHLELDH…YSTYADENEL (145 aa)). The segment at 547–929 (IVTDRKSVVV…ALYKGLVASG (383 aa)) is carbamoyl phosphate synthetic domain. The 191-residue stretch at 671–861 (EAALTKLGIP…MANVATKVIL (191 aa)) folds into the ATP-grasp 2 domain. Positions 707, 746, 752, 777, 778, 779, 780, 820, and 832 each coordinate ATP. Mg(2+) contacts are provided by Gln820, Glu832, and Asn834. The Mn(2+) site is built by Gln820, Glu832, and Asn834. The 143-residue stretch at 930-1072 (INIPTHGSVI…QTKRHEVVHA (143 aa)) folds into the MGS-like domain. The interval 930–1072 (INIPTHGSVI…QTKRHEVVHA (143 aa)) is allosteric domain.

This sequence belongs to the CarB family. Composed of two chains; the small (or glutamine) chain promotes the hydrolysis of glutamine to ammonia, which is used by the large (or ammonia) chain to synthesize carbamoyl phosphate. Tetramer of heterodimers (alpha,beta)4. Mg(2+) is required as a cofactor. The cofactor is Mn(2+).

It carries out the reaction hydrogencarbonate + L-glutamine + 2 ATP + H2O = carbamoyl phosphate + L-glutamate + 2 ADP + phosphate + 2 H(+). The enzyme catalyses hydrogencarbonate + NH4(+) + 2 ATP = carbamoyl phosphate + 2 ADP + phosphate + 2 H(+). Its pathway is amino-acid biosynthesis; L-arginine biosynthesis; carbamoyl phosphate from bicarbonate: step 1/1. It participates in pyrimidine metabolism; UMP biosynthesis via de novo pathway; (S)-dihydroorotate from bicarbonate: step 1/3. Functionally, large subunit of the glutamine-dependent carbamoyl phosphate synthetase (CPSase). CPSase catalyzes the formation of carbamoyl phosphate from the ammonia moiety of glutamine, carbonate, and phosphate donated by ATP, constituting the first step of 2 biosynthetic pathways, one leading to arginine and/or urea and the other to pyrimidine nucleotides. The large subunit (synthetase) binds the substrates ammonia (free or transferred from glutamine from the small subunit), hydrogencarbonate and ATP and carries out an ATP-coupled ligase reaction, activating hydrogencarbonate by forming carboxy phosphate which reacts with ammonia to form carbamoyl phosphate. The protein is Carbamoyl phosphate synthase large chain of Bacillus anthracis (strain A0248).